Here is a 74-residue protein sequence, read N- to C-terminus: uncharacterized protein (74 aa).

This is an uncharacterized protein from Avena sativa (Oat).